A 108-amino-acid chain; its full sequence is Phosphoribosyl-ATP pyrophosphatase (108 aa).

The protein belongs to the PRA-PH family.

It localises to the cytoplasm. It catalyses the reaction 1-(5-phospho-beta-D-ribosyl)-ATP + H2O = 1-(5-phospho-beta-D-ribosyl)-5'-AMP + diphosphate + H(+). The protein operates within amino-acid biosynthesis; L-histidine biosynthesis; L-histidine from 5-phospho-alpha-D-ribose 1-diphosphate: step 2/9. This Pelobacter propionicus (strain DSM 2379 / NBRC 103807 / OttBd1) protein is Phosphoribosyl-ATP pyrophosphatase.